Here is a 287-residue protein sequence, read N- to C-terminus: MSAIDDLPPLREVIRRHDLAARKSLGQNFLLDLNLTARIARAAGPLEGVTVVEIGPGPGGLTRALLATGAKRVIAIERDERALGALEEIAAHYPGRLDIISGDAMEFDPRPLLNGDRARIVANLPYNIATPLLIGWLCAEPWPPWYEMMVLMFQREVAQRIVAHHDDDAYGRLAVLANWRAETQMLFDISPSAFVPPPKVTSSVVRLVPRAQPEPCDRAALEQVAAAAFGQRRKMLRQSLKSLGVDPAQLTAAAGIDPARRAETVPVSGFVAMANELANSRAIRTQA.

6 residues coordinate S-adenosyl-L-methionine: asparagine 28, leucine 30, glycine 55, glutamate 77, aspartate 103, and asparagine 123.

This sequence belongs to the class I-like SAM-binding methyltransferase superfamily. rRNA adenine N(6)-methyltransferase family. RsmA subfamily.

The protein localises to the cytoplasm. It catalyses the reaction adenosine(1518)/adenosine(1519) in 16S rRNA + 4 S-adenosyl-L-methionine = N(6)-dimethyladenosine(1518)/N(6)-dimethyladenosine(1519) in 16S rRNA + 4 S-adenosyl-L-homocysteine + 4 H(+). Its function is as follows. Specifically dimethylates two adjacent adenosines (A1518 and A1519) in the loop of a conserved hairpin near the 3'-end of 16S rRNA in the 30S particle. May play a critical role in biogenesis of 30S subunits. The protein is Ribosomal RNA small subunit methyltransferase A of Rhodopseudomonas palustris (strain TIE-1).